A 623-amino-acid polypeptide reads, in one-letter code: Actin-related protein 8 (623 aa).

Residues 1-24 (MTQTDRDAENGRDREKDREKEQQR) are compositionally biased toward basic and acidic residues. The tract at residues 1 to 29 (MTQTDRDAENGRDREKDREKEQQRGVKRP) is disordered. 283 to 286 (DVGD) serves as a coordination point for ATP. A compositionally biased stretch (low complexity) spans 428 to 438 (TQSKQDQSSKA). The tract at residues 428-458 (TQSKQDQSSKASADRKSFPKPSSFEGESSVC) is disordered.

This sequence belongs to the actin family. ARP8 subfamily. In terms of assembly, component of the chromatin remodeling INO80 complex; specifically part of a complex module associated with the DBINO domain of INO80. Exists as monomers and dimers, but the dimer is most probably the biologically relevant form required for stable interactions with histones that exploits the twofold symmetry of the nucleosome core.

It localises to the nucleus. Its subcellular location is the chromosome. In terms of biological role, plays an important role in the functional organization of mitotic chromosomes. Exhibits low basal ATPase activity, and unable to polymerize. Its function is as follows. Proposed core component of the chromatin remodeling INO80 complex which is involved in transcriptional regulation, DNA replication and probably DNA repair. Required for the recruitment of INO80 (and probably the INO80 complex) to sites of DNA damage Strongly prefer nucleosomes and H3-H4 tetramers over H2A-H2B dimers, suggesting it may act as a nucleosome recognition module within the complex. The protein is Actin-related protein 8 (actr8) of Danio rerio (Zebrafish).